We begin with the raw amino-acid sequence, 1194 residues long: DNA polymerase catalytic subunit (1194 aa).

It belongs to the DNA polymerase type-B family. In terms of assembly, forms a complex with the ssDNA-binding protein, the DNA polymerase processivity factor, and the alkaline exonuclease. Interacts with the helicase-primase complex composed of the primase, the helicase and the primase-associated factor; this interaction may coordinate leading and lagging strand DNA synthesis at the replication fork.

Its subcellular location is the host nucleus. It carries out the reaction DNA(n) + a 2'-deoxyribonucleoside 5'-triphosphate = DNA(n+1) + diphosphate. The catalysed reaction is Endonucleolytic cleavage to 5'-phosphomonoester.. Its function is as follows. Replicates viral genomic DNA. The replication complex is composed of six viral proteins: the DNA polymerase, processivity factor, primase, primase-associated factor, helicase, and ssDNA-binding protein. Additionally, the polymerase contains an intrinsic ribonuclease H (RNase H) activity that specifically degrades RNA/DNA heteroduplexes or duplex DNA substrates in the 5' to 3' direction. Therefore, it can catalyze the excision of the RNA primers that initiate the synthesis of Okazaki fragments at a replication fork during viral DNA replication. The polypeptide is DNA polymerase catalytic subunit (Varicella-zoster virus (strain Dumas) (HHV-3)).